We begin with the raw amino-acid sequence, 427 residues long: Enolase (427 aa).

Gln-163 contributes to the (2R)-2-phosphoglycerate binding site. Glu-205 (proton donor) is an active-site residue. Mg(2+) is bound by residues Asp-242, Glu-285, and Asp-312. (2R)-2-phosphoglycerate contacts are provided by Lys-337, Arg-366, Ser-367, and Lys-388. Lys-337 acts as the Proton acceptor in catalysis.

The protein belongs to the enolase family. The cofactor is Mg(2+).

Its subcellular location is the cytoplasm. The protein localises to the secreted. The protein resides in the cell surface. It catalyses the reaction (2R)-2-phosphoglycerate = phosphoenolpyruvate + H2O. The protein operates within carbohydrate degradation; glycolysis; pyruvate from D-glyceraldehyde 3-phosphate: step 4/5. Catalyzes the reversible conversion of 2-phosphoglycerate (2-PG) into phosphoenolpyruvate (PEP). It is essential for the degradation of carbohydrates via glycolysis. This Ralstonia pickettii (strain 12J) protein is Enolase.